The chain runs to 288 residues: Syntaxin-1A (288 aa).

A compositionally biased stretch (basic and acidic residues) spans 1–13; the sequence is MKDRTQELRTAKD. The disordered stretch occupies residues 1–20; that stretch reads MKDRTQELRTAKDSDDDDDV. The Cytoplasmic portion of the chain corresponds to 1–265; that stretch reads MKDRTQELRT…KYQSKARRKK (265 aa). A phosphoserine mark is found at Ser14, Ser64, and Ser95. A coiled-coil region spans residues 68-109; it reads DEKTKEELEELMSDIKKTANKVRSKLKSIEQSIEQEEGLNRS. Ser188 bears the Phosphoserine; by DAPK1 mark. The t-SNARE coiled-coil homology domain maps to 192–254; it reads LSEIETRHSE…ERAVSDTKKA (63 aa). Glycyl lysine isopeptide (Lys-Gly) (interchain with G-Cter in SUMO) cross-links involve residues Lys252, Lys253, and Lys256. A helical; Anchor for type IV membrane protein transmembrane segment spans residues 266-288; sequence IMIIICCVILGIIIASTIGGIFG.

It belongs to the syntaxin family. As to quaternary structure, part of the SNARE core complex containing SNAP25, VAMP2 and STX1A; this complex constitutes the basic catalytic machinery of the complex neurotransmitter release apparatus. The SNARE complex interacts with CPLX1. Interacts with STXBP1. The interaction with STXBP1 promotes assembly of the SNARE complex. Interacts (via C-terminus) with KCNB1 (via C-terminus); the interaction increases in a calcium-dependent manner and induces a pore-independent enhancement of exocytosis in neuroendocrine cells, chromaffin cells, pancreatic beta cells and from the soma of dorsal root ganglia (DRG) neurons. Interacts with SYTL4. Interacts with STXBP6. Interacts with PLCL1 (via C2 domain). Interacts with OTOF. Interacts with LGI3. Interacts (via the H3 domain) with SLC6A4 (via the N-terminus); this interaction regulates SLC4A6 channel conductance in thalamocortical neurons. Interacts with SYT6 and SYT8; the interaction is Ca(2+)-dependent. Interacts with VAMP8. Interacts with SNAP23. Interacts with VAPA and SYBU. Interacts with PRRT2. Interacts with SEPT8. Interacts with STXBP5L. Interacts with synaptotagmin-1/SYT1. Interacts with SEPTIN5; in the cerebellar cortex. Interacts with SEPTIN4; in the striatum. Post-translationally, phosphorylated by CK2. Phosphorylation at Ser-188 by DAPK1 significantly decreases its interaction with STXBP1. In terms of processing, (Microbial infection) Targeted and hydrolyzed by C.botulinum neurotoxin type C (BoNT/C), which hydrolyzes the 253-Lys-|-Ala-254 bond. Cleavage inhibits neurotransmitter release. Phosphorylated by CK2. Phosphorylation at Ser-188 by DAPK1 significantly decreases its interaction with STXBP1. Post-translationally, sumoylated, sumoylation is required for regulation of synaptic vesicle endocytosis. As to expression, expressed predominantly in cerebral cortex, hippocampus, cerebellum, adrenal medulla and retina with weak expression detected in non-neuronal tissues.

It localises to the cytoplasmic vesicle. The protein resides in the secretory vesicle. It is found in the synaptic vesicle membrane. Its subcellular location is the cell membrane. The protein localises to the synapse. It localises to the synaptosome. Its function is as follows. Plays an essential role in hormone and neurotransmitter calcium-dependent exocytosis and endocytosis. Part of the SNARE (Soluble NSF Attachment Receptor) complex composed of SNAP25, STX1A and VAMP2 which mediates the fusion of synaptic vesicles with the presynaptic plasma membrane. STX1A and SNAP25 are localized on the plasma membrane while VAMP2 resides in synaptic vesicles. The pairing of the three SNAREs from the N-terminal SNARE motifs to the C-terminal anchors leads to the formation of the SNARE complex, which brings membranes into close proximity and results in final fusion. Participates in the calcium-dependent regulation of acrosomal exocytosis in sperm. Also plays an important role in the exocytosis of hormones such as insulin or glucagon-like peptide 1 (GLP-1). In Rattus norvegicus (Rat), this protein is Syntaxin-1A (Stx1a).